The primary structure comprises 505 residues: MEEFQGYLELDKSRQHDLLYPLFFREYIYAFAHDHVLNRSSLLENVSYDNKSGFLIVKHLINRMYHQNNLIISANDSNLKNFGEYNKNLYSQIISEGFVVIMEIPFSLRLVSSLKGTEIVKIYKLRSIHSTFPFLEDKFPHLNYVSNVSIPYPIHPEILVQILRYWVKDASSLHLLRLYLHKYFNWNSIITPKNSVFIFSKMNPRFLLFLYNSHVCEYESILLFLRNKPSHLRLTSSGSFFERIFFYAKIKHSVEEVFVNDFSVTPWFFKAPFMHYVRYRGKSILASKDTPLLMNKWKYYLIHLWQSYFYVWSQPARIYINQLSKHSLIFLGYFSSIRLNLSVVRSQMLKNAFLIDNAMKRLDTLVPISPLIGSLAKMNFCNGLGHPVSKSIWADSSDLDIIDRFAHICRNLSHYYSGSSKKKSLYRIKYILRLSCVKTLSRKHKSTVRAFLKRLGLGLLEEFFTEEEEILSLIFPKTYSTFRKLYRGRIWYLDLFCINDLINHE.

It belongs to the intron maturase 2 family. MatK subfamily.

Its subcellular location is the plastid. The protein resides in the chloroplast. In terms of biological role, usually encoded in the trnK tRNA gene intron. Probably assists in splicing its own and other chloroplast group II introns. The polypeptide is Maturase K (Elaeagnus umbellata (Autumn olive)).